Here is a 350-residue protein sequence, read N- to C-terminus: Glutamyl-tRNA reductase (350 aa).

Substrate is bound by residues 53-56, Ser-105, 110-112, and Gln-116; these read TCNR and ETQ. Cys-54 serves as the catalytic Nucleophile. 185 to 190 provides a ligand contact to NADP(+); it reads GAGETA.

This sequence belongs to the glutamyl-tRNA reductase family. Homodimer.

It catalyses the reaction (S)-4-amino-5-oxopentanoate + tRNA(Glu) + NADP(+) = L-glutamyl-tRNA(Glu) + NADPH + H(+). It participates in porphyrin-containing compound metabolism; protoporphyrin-IX biosynthesis; 5-aminolevulinate from L-glutamyl-tRNA(Glu): step 1/2. In terms of biological role, catalyzes the NADPH-dependent reduction of glutamyl-tRNA(Glu) to glutamate 1-semialdehyde (GSA). This Deinococcus radiodurans (strain ATCC 13939 / DSM 20539 / JCM 16871 / CCUG 27074 / LMG 4051 / NBRC 15346 / NCIMB 9279 / VKM B-1422 / R1) protein is Glutamyl-tRNA reductase.